We begin with the raw amino-acid sequence, 415 residues long: MSFLKTSDPAVYNAIMQETTRLKETIDLIASENYTSKAVLEAQGSVFTNKYAEGYPGKRYYAGCEYADAVEELAIDRAKTLFHAEHANVQPHSGAQANMAAYFAMVKPGDTIMGLTLSHGGHLTHGSKVNFTGKLYHVIEYGLNAETERIDYDNLEKLAMEHRPRMIVTGASAYPRILDFERFRAICDKVDAKLMVDIAHIAGLVAAGLHPSPVPYADVVTSTSHKTLRGPRGGFILCKEQYAKAIDQAVFPVMQGGPLMQVVAAKAVAFQEAMQPGFVTYQKKTLENTQVMAEELRKLGLRLVSGGTDNHLVLVDLSPIGVNGYDAQLALRRAGIVINRNTVPFAENQTANVPAGIRLGCPAATSRGFGPAEIRQTVGWIGKVLKNIGNEDVEKQVLAEVIHLCRKFPVPGIDI.

(6S)-5,6,7,8-tetrahydrofolate-binding positions include Leu117 and 121-123 (GHL). An N6-(pyridoxal phosphate)lysine modification is found at Lys226.

This sequence belongs to the SHMT family. As to quaternary structure, homodimer. Pyridoxal 5'-phosphate is required as a cofactor.

It is found in the cytoplasm. It catalyses the reaction (6R)-5,10-methylene-5,6,7,8-tetrahydrofolate + glycine + H2O = (6S)-5,6,7,8-tetrahydrofolate + L-serine. Its pathway is one-carbon metabolism; tetrahydrofolate interconversion. It participates in amino-acid biosynthesis; glycine biosynthesis; glycine from L-serine: step 1/1. Its function is as follows. Catalyzes the reversible interconversion of serine and glycine with tetrahydrofolate (THF) serving as the one-carbon carrier. This reaction serves as the major source of one-carbon groups required for the biosynthesis of purines, thymidylate, methionine, and other important biomolecules. Also exhibits THF-independent aldolase activity toward beta-hydroxyamino acids, producing glycine and aldehydes, via a retro-aldol mechanism. The chain is Serine hydroxymethyltransferase from Dehalococcoides mccartyi (strain CBDB1).